Here is a 748-residue protein sequence, read N- to C-terminus: MALSLEAYEQDIDELISDEKSCCLDVTDSSDVEGDELNDLELNPFDGLPYSSRFYKLLKERETLPIWKIKYDFLEHLAHNQIVVVSAGPKSGKSSQIPQWCAEYCLAGHYQHGAVVCTQAHKQTAVWLAMRVADEMDVNIGHEVGYIVPFENCCTSETILRYCTDEMLRREMMSNPLLSSYGVVIIDDVYERFVSTDVLLSFLKVIAVSRPELKVVIITCPSLSGTLVSYYGNAPLVEAENTHSVESVYTTSLPRDYFHSALRLLFEIHHTKEKGDIVVFLACEEEIKRAYEHIKQEALHMNPELGELMPIALYPHQSISDYIPYEELDDNSKNPKRKVVLTTSLGESLIWMKNIFFVIDVGIEKRKVYNTRIRAESLVTQPISKVRAKMRKHILSSSSEGKLFCLYPEDFAHEMKPFLTAKVEECNLISMVLFLKRMDIAGLAHCDFINRPDPESLMQALEDLDYLAALDNDGNLSEFGIIMSEFPLDPQLSKSILAACEFDCVDEMLTLAAMVTAPNCFIDLPPEAKELDLIGKGKFFHPEGDHFTLINIYNEYEQMKRNNASQYDVEKWCQNHCLSFVALEMARAIRNELLDIMRRIELPLTGPAFGSDENVTNIKKSLLSGYFMQIARDVDGLGNYIMLTHKQVGQLHPDSGFCNSAKVPEWVLFHEFSVSERSCIRIVSEISPNLFMEFVPPYYFSNLPPSETKDLLQQDQTPDTPPTEEPREEEPLHEANDEGTAEQRCIIQ.

The region spanning 74 to 240 is the Helicase ATP-binding domain; that stretch reads LEHLAHNQIV…YGNAPLVEAE (167 aa). 87–94 contributes to the ATP binding site; it reads AGPKSGKS. A Helicase C-terminal domain is found at 263–439; it reads RLLFEIHHTK…SMVLFLKRMD (177 aa). A disordered region spans residues 706–748; it reads SETKDLLQQDQTPDTPPTEEPREEEPLHEANDEGTAEQRCIIQ.

This sequence belongs to the DEAD box helicase family. DEAH subfamily.

The protein localises to the nucleus. Its subcellular location is the mitochondrion. It carries out the reaction ATP + H2O = ADP + phosphate + H(+). This is Putative pre-mRNA-splicing factor ATP-dependent RNA helicase DHX32 (dhx32) from Xenopus laevis (African clawed frog).